Consider the following 207-residue polypeptide: LexA repressor (207 aa).

A DNA-binding region (H-T-H motif) is located at residues 28–48 (RAEISRELGFKSANAAEEHLK). Catalysis depends on for autocatalytic cleavage activity residues Ser-123 and Lys-160.

This sequence belongs to the peptidase S24 family. In terms of assembly, homodimer.

It catalyses the reaction Hydrolysis of Ala-|-Gly bond in repressor LexA.. Its function is as follows. Represses a number of genes involved in the response to DNA damage (SOS response), including recA and lexA. In the presence of single-stranded DNA, RecA interacts with LexA causing an autocatalytic cleavage which disrupts the DNA-binding part of LexA, leading to derepression of the SOS regulon and eventually DNA repair. In Haemophilus influenzae (strain 86-028NP), this protein is LexA repressor.